A 78-amino-acid chain; its full sequence is Acyl carrier protein (78 aa).

The Carrier domain maps to 2-77 (SDTVERVKKI…DAVKFIDKAS (76 aa)). Ser-37 carries the post-translational modification O-(pantetheine 4'-phosphoryl)serine.

Belongs to the acyl carrier protein (ACP) family. In terms of processing, 4'-phosphopantetheine is transferred from CoA to a specific serine of apo-ACP by AcpS. This modification is essential for activity because fatty acids are bound in thioester linkage to the sulfhydryl of the prosthetic group.

It is found in the cytoplasm. It participates in lipid metabolism; fatty acid biosynthesis. In terms of biological role, carrier of the growing fatty acid chain in fatty acid biosynthesis. This Bartonella henselae (strain ATCC 49882 / DSM 28221 / CCUG 30454 / Houston 1) (Rochalimaea henselae) protein is Acyl carrier protein.